The sequence spans 258 residues: Snake venom serine protease 3 (258 aa).

The N-terminal stretch at Met1–Ala18 is a signal peptide. A propeptide spanning residues Gln19 to Leu24 is cleaved from the precursor. The region spanning Val25–Ala249 is the Peptidase S1 domain. 6 cysteine pairs are disulfide-bonded: Cys31/Cys163, Cys50/Cys66, Cys98/Cys256, Cys142/Cys210, Cys174/Cys189, and Cys200/Cys225. Asn44 is a glycosylation site (N-linked (GlcNAc...) asparagine). The Charge relay system role is filled by His65. The N-linked (GlcNAc...) asparagine glycan is linked to Asn103. Catalysis depends on Asp110, which acts as the Charge relay system. N-linked (GlcNAc...) asparagine glycans are attached at residues Asn117, Asn121, and Asn154. Ser204 acts as the Charge relay system in catalysis. Asn251 is a glycosylation site (N-linked (GlcNAc...) asparagine).

Belongs to the peptidase S1 family. Snake venom subfamily. As to quaternary structure, monomer. In terms of tissue distribution, expressed by the venom gland.

It is found in the secreted. Functionally, snake venom serine protease that may act in the hemostasis system of the prey. In Craspedocephalus gramineus (Bamboo pit viper), this protein is Snake venom serine protease 3 (TLG3).